Reading from the N-terminus, the 343-residue chain is Ribosomal RNA small subunit methyltransferase C (343 aa).

Belongs to the methyltransferase superfamily. RsmC family. As to quaternary structure, monomer.

It localises to the cytoplasm. The catalysed reaction is guanosine(1207) in 16S rRNA + S-adenosyl-L-methionine = N(2)-methylguanosine(1207) in 16S rRNA + S-adenosyl-L-homocysteine + H(+). In terms of biological role, specifically methylates the guanine in position 1207 of 16S rRNA in the 30S particle. The chain is Ribosomal RNA small subunit methyltransferase C from Shigella flexneri serotype 5b (strain 8401).